The following is a 324-amino-acid chain: MKNAKMIGFGLYTPKNLVENERLQEFLETSDEWIRTRTGIERRYISLDENTSDLAVEASKKALSQARLSAEEIDLIIVATVTPDNFTPSTACIVQDKLGAKNAWAFDINAACTGFIYALKLGRSLIRSGEANNALIIGAETLSKALNWEDRGSCVLFGDGAGATVLTSTEEDCGIKCVNVKSDGSKGDSLVIQGLPLNSPFKDGREVSENYINMNGREIFKFATKVMEESIVEILEKENIKIEDIAAIIPHQANLRIIDYVVKRLGIPREKFITNLQNYGNTSGASIPIALCESIDEGNLKKGDNIIMVGFGGGLTWGAALIKL.

Residues Cys-112 and His-251 contribute to the active site. Positions 252–256 (QANLR) are ACP-binding. Asn-281 is an active-site residue.

The protein belongs to the thiolase-like superfamily. FabH family. In terms of assembly, homodimer.

The protein localises to the cytoplasm. It carries out the reaction malonyl-[ACP] + acetyl-CoA + H(+) = 3-oxobutanoyl-[ACP] + CO2 + CoA. The protein operates within lipid metabolism; fatty acid biosynthesis. Its function is as follows. Catalyzes the condensation reaction of fatty acid synthesis by the addition to an acyl acceptor of two carbons from malonyl-ACP. Catalyzes the first condensation reaction which initiates fatty acid synthesis and may therefore play a role in governing the total rate of fatty acid production. Possesses both acetoacetyl-ACP synthase and acetyl transacylase activities. Its substrate specificity determines the biosynthesis of branched-chain and/or straight-chain of fatty acids. The chain is Beta-ketoacyl-[acyl-carrier-protein] synthase III from Clostridium perfringens (strain 13 / Type A).